We begin with the raw amino-acid sequence, 262 residues long: Taurine import ATP-binding protein TauB (262 aa).

The ABC transporter domain occupies 4–234; that stretch reads VDHASVFFAA…RFAETGDARS (231 aa). 39–46 is an ATP binding site; it reads GASGCGKS.

This sequence belongs to the ABC transporter superfamily. Taurine importer (TC 3.A.1.17.1) family. In terms of assembly, the complex is composed of two ATP-binding proteins (TauB), two transmembrane proteins (TauC) and a solute-binding protein (TauA).

The protein localises to the cell inner membrane. It catalyses the reaction taurine(out) + ATP + H2O = taurine(in) + ADP + phosphate + H(+). Its function is as follows. Part of the ABC transporter complex TauABC involved in taurine import. Responsible for energy coupling to the transport system. In Rhizobium johnstonii (strain DSM 114642 / LMG 32736 / 3841) (Rhizobium leguminosarum bv. viciae), this protein is Taurine import ATP-binding protein TauB.